A 239-amino-acid polypeptide reads, in one-letter code: 1-(5-phosphoribosyl)-5-[(5-phosphoribosylamino)methylideneamino] imidazole-4-carboxamide isomerase (239 aa).

Aspartate 8 serves as the catalytic Proton acceptor. Aspartate 129 (proton donor) is an active-site residue.

This sequence belongs to the HisA/HisF family.

The protein localises to the cytoplasm. The enzyme catalyses 1-(5-phospho-beta-D-ribosyl)-5-[(5-phospho-beta-D-ribosylamino)methylideneamino]imidazole-4-carboxamide = 5-[(5-phospho-1-deoxy-D-ribulos-1-ylimino)methylamino]-1-(5-phospho-beta-D-ribosyl)imidazole-4-carboxamide. Its pathway is amino-acid biosynthesis; L-histidine biosynthesis; L-histidine from 5-phospho-alpha-D-ribose 1-diphosphate: step 4/9. In Bacillus cereus (strain ZK / E33L), this protein is 1-(5-phosphoribosyl)-5-[(5-phosphoribosylamino)methylideneamino] imidazole-4-carboxamide isomerase.